A 453-amino-acid polypeptide reads, in one-letter code: Aminodeoxychorismate synthase component 1 (453 aa).

L-tryptophan-binding positions include Ser36, 43 to 46 (YSRF), and 240 to 242 (PFS). The Proton donor role is filled by Glu258. Lys274 acts as the N6-(4-deoxychorismate)-lysine intermediate in catalysis.

Belongs to the anthranilate synthase component I family. Monomer. Heterodimer consisting of two non-identical subunits: a glutamine amidotransferase subunit (PabA) and a aminodeoxychorismate synthase subunit (PabB). It depends on Mg(2+) as a cofactor.

It catalyses the reaction chorismate + L-glutamine = 4-amino-4-deoxychorismate + L-glutamate. Its pathway is cofactor biosynthesis; tetrahydrofolate biosynthesis; 4-aminobenzoate from chorismate: step 1/2. With respect to regulation, inhibited by 6-diazo-5-oxo-L-norleucine (DON). The inhibition is competitive with glutamine but uncompetitive with chorismate. Also inhibited by 2-fluorochorismate. Its function is as follows. Part of a heterodimeric complex that catalyzes the two-step biosynthesis of 4-amino-4-deoxychorismate (ADC), a precursor of p-aminobenzoate (PABA) and tetrahydrofolate. In the first step, a glutamine amidotransferase (PabA) generates ammonia as a substrate that, along with chorismate, is used in the second step, catalyzed by aminodeoxychorismate synthase (PabB) to produce ADC. PabB, in the absence of PabA, can catalyze the formation of ADC in the presence of exogenous ammonia. This is Aminodeoxychorismate synthase component 1 (pabB) from Escherichia coli (strain K12).